The following is a 1054-amino-acid chain: Disks large-associated protein 2 (1054 aa).

Disordered regions lie at residues 32 to 87 (EPEE…SGSR) and 242 to 301 (SHSL…SDDN). Positions 242–255 (SHSLEGSSKSNANG) are enriched in polar residues. Basic residues predominate over residues 267 to 281 (HAHHAKHSKRSKSKE). Residues 289–299 (RPGMSSWWSSD) show a composition bias toward low complexity. 4 positions are modified to phosphoserine: Ser-298, Ser-304, Ser-386, and Ser-452. Disordered regions lie at residues 442–464 (GDEE…ILPE) and 609–666 (YKKT…TDSL). Over residues 628–641 (VTAQSSTESTQDAY) the composition is skewed to polar residues. A phosphoserine mark is found at Ser-662, Ser-665, Ser-668, and Ser-715. The segment at 719–746 (QDSEFPEHQPYPRSDVETATDSDTESRG) is disordered. Position 738 is a phosphothreonine (Thr-738). 5 positions are modified to phosphoserine: Ser-740, Ser-771, Ser-806, Ser-978, and Ser-1007. Composition is skewed to basic and acidic residues over residues 977-987 (ESPERKEERKV) and 1002-1020 (ITRE…EARR). The interval 977–1021 (ESPERKEERKVPPPIPKKPPKGKFPITREKSLDLPDRQRQEARRR) is disordered.

This sequence belongs to the SAPAP family. As to quaternary structure, interacts with DLG1 and DLG4/PSD-95. In terms of tissue distribution, expressed in brain and kidney.

The protein localises to the cell membrane. The protein resides in the postsynaptic density. It localises to the synapse. Functionally, may play a role in the molecular organization of synapses and neuronal cell signaling. Could be an adapter protein linking ion channel to the subsynaptic cytoskeleton. May induce enrichment of PSD-95/SAP90 at the plasma membrane. In Homo sapiens (Human), this protein is Disks large-associated protein 2.